We begin with the raw amino-acid sequence, 226 residues long: X-linked lymphocyte-regulated protein 3A (226 aa).

The segment covering 1–18 (MSSRERKATDTAGRHSRM) has biased composition (basic and acidic residues). A disordered region spans residues 1 to 72 (MSSRERKATD…QDLVQEFEEP (72 aa)). A compositionally biased stretch (polar residues) spans 21–30 (NLSSDDSQNP). Composition is skewed to basic and acidic residues over residues 39 to 48 (EVLDAGREDI) and 56 to 65 (QQARKEKQDL). Residues 155-210 (ETLTLQKNRMEEFKSLCEKYLEKLEVLRDSRGNSIAEELRRLIATLEIKLLMLHNQ) adopt a coiled-coil conformation.

The protein belongs to the XLR/SYCP3 family. As to expression, expressed in lymphoid cells.

The protein is X-linked lymphocyte-regulated protein 3A (Xlr3a) of Mus musculus (Mouse).